The primary structure comprises 266 residues: MSDILNKILAVKADEVAAAKKYRSLASLRSEVEADKDARAALRNFEGALRQKIAAGNAGIIAEIKKASPSKGIIRPDFQPDQIATSYAQHGAACLSVLTDVQFFQGSPDYLKQARAACSLPVLRKDFMIDPYQIYEARSWGADCILLIVAGLDHGLMAELEACAHELGMHVLVEVHNGEELNAALRLKTTLLGVNNRNLRTFETSLQTTLDLLPRIPPEKLVITESAIVTPDDVKKMRDADVHAFLIGETFMRAPDPGQELNRLFS.

The protein belongs to the TrpC family.

The enzyme catalyses 1-(2-carboxyphenylamino)-1-deoxy-D-ribulose 5-phosphate + H(+) = (1S,2R)-1-C-(indol-3-yl)glycerol 3-phosphate + CO2 + H2O. The protein operates within amino-acid biosynthesis; L-tryptophan biosynthesis; L-tryptophan from chorismate: step 4/5. The protein is Indole-3-glycerol phosphate synthase of Herminiimonas arsenicoxydans.